The primary structure comprises 223 residues: Deoxyribose-phosphate aldolase (223 aa).

The Proton donor/acceptor role is filled by Asp89. The active-site Schiff-base intermediate with acetaldehyde is the Lys152. The active-site Proton donor/acceptor is Lys181.

Belongs to the DeoC/FbaB aldolase family. DeoC type 1 subfamily.

The protein localises to the cytoplasm. It carries out the reaction 2-deoxy-D-ribose 5-phosphate = D-glyceraldehyde 3-phosphate + acetaldehyde. The protein operates within carbohydrate degradation; 2-deoxy-D-ribose 1-phosphate degradation; D-glyceraldehyde 3-phosphate and acetaldehyde from 2-deoxy-alpha-D-ribose 1-phosphate: step 2/2. Its function is as follows. Catalyzes a reversible aldol reaction between acetaldehyde and D-glyceraldehyde 3-phosphate to generate 2-deoxy-D-ribose 5-phosphate. This chain is Deoxyribose-phosphate aldolase, found in Listeria monocytogenes serotype 4a (strain HCC23).